The following is an 855-amino-acid chain: Endochitinase 2 (855 aa).

Positions 1–22 (MGPTNILAAFIAVSSLFIQSLA) are cleaved as a signal peptide. The region spanning 29–340 (SNLAVYWGQG…DIMKEVLLRC (312 aa)) is the GH18 domain. The N-linked (GlcNAc...) asparagine glycan is linked to Asn-90. Glu-175 serves as the catalytic Proton donor. Positions 341–672 (DPDPPTSTVT…APSSSTTEDR (332 aa)) are disordered. Residues 346-400 (TSTVTSTTSASTSTQTSSQSTTMETKTLSASTTPSSPSTVSPSSTMQTTSTGSTS) are compositionally biased toward low complexity. Residues 401-456 (IETVTTRSQEPPSTTISTRSASTEPVTTRSQEPPSTTISTRSASTETVTTRSQEPP) are compositionally biased toward polar residues. Over residues 457–483 (STTISTWSASTETSTSSQDSPSTTIST) the composition is skewed to low complexity. Residues 484 to 521 (KSAPTGTVTTRSQDLPSTTISTRSPETETETATTKSQG) are compositionally biased toward polar residues. Residues 522–533 (SPSITLSTRSSS) are compositionally biased toward low complexity. The span at 534-555 (AETVSTRSQHSSSTTISTKSAP) shows a compositional bias: polar residues. The segment covering 556–567 (TETGTTSEHSTS) has biased composition (low complexity). The span at 568–641 (MPVSTRSAST…SQTPTTIITG (74 aa)) shows a compositional bias: polar residues. Composition is skewed to low complexity over residues 642 to 652 (TPSDPVSAPTT) and 659 to 672 (TLTLAPSSSTTEDR). The GPI-anchor amidated glycine moiety is linked to residue Gly-826. The propeptide at 827–855 (SAMTVRSMDVVAKALITAGAAVLGLFLGL) is removed in mature form.

Belongs to the glycosyl hydrolase 18 family. Chitinase class III subfamily.

It localises to the cell membrane. It catalyses the reaction Random endo-hydrolysis of N-acetyl-beta-D-glucosaminide (1-&gt;4)-beta-linkages in chitin and chitodextrins.. In terms of biological role, may be associated with endosporulation. The chain is Endochitinase 2 (CTS2) from Coccidioides posadasii (strain C735) (Valley fever fungus).